The primary structure comprises 45 residues: Photosystem II reaction center protein K (45 aa).

The propeptide occupies 1 to 8 (MEAALLLA). Residues 24-44 (LPIIPVFFLLLAFVWQAAVGF) traverse the membrane as a helical segment.

The protein belongs to the PsbK family. In terms of assembly, PSII is composed of 1 copy each of membrane proteins PsbA, PsbB, PsbC, PsbD, PsbE, PsbF, PsbH, PsbI, PsbJ, PsbK, PsbL, PsbM, PsbT, PsbX, PsbY, PsbZ, Psb30/Ycf12, peripheral proteins PsbO, CyanoQ (PsbQ), PsbU, PsbV and a large number of cofactors. It forms dimeric complexes.

The protein localises to the cellular thylakoid membrane. In terms of biological role, one of the components of the core complex of photosystem II (PSII). PSII is a light-driven water:plastoquinone oxidoreductase that uses light energy to abstract electrons from H(2)O, generating O(2) and a proton gradient subsequently used for ATP formation. It consists of a core antenna complex that captures photons, and an electron transfer chain that converts photonic excitation into a charge separation. This is Photosystem II reaction center protein K from Nostoc sp. (strain PCC 7120 / SAG 25.82 / UTEX 2576).